Consider the following 165-residue polypeptide: V-type proton ATPase 16 kDa proteolipid subunit (165 aa).

At 1-10 (MSSTFSGDET) the chain is on the lumenal side. The chain crosses the membrane as a helical span at residues 11-33 (APFFGFLGAAAALVFSCMGAAYG). The Cytoplasmic portion of the chain corresponds to 34 to 55 (TAKSGVGVASMGVMRPELVMKS). A helical transmembrane segment spans residues 56-76 (IVPVVMAGVLGIYGLIIAVII). At 77–95 (STGINPKAKSYYLFDGYAH) the chain is on the lumenal side. The helical transmembrane segment at 96 to 117 (LSSGLACGLAGLSAGMAIGIVG) threads the bilayer. Residues 118-129 (DAGVRANAQQPK) lie on the Cytoplasmic side of the membrane. Residues 130–155 (LFVGMILILIFAEALALYGLIVGIIL) traverse the membrane as a helical segment. Topologically, residues 156 to 165 (SSRAGQSRAD) are lumenal.

This sequence belongs to the V-ATPase proteolipid subunit family. In terms of assembly, V-ATPase is a heteromultimeric enzyme composed of a peripheral catalytic V1 complex (main components: subunits A, B, C, D, E, and F) attached to an integral membrane V0 proton pore complex (main component: the proteolipid protein; which is present as a hexamer that forms the proton-conducting pore). Higher expression in leaves, followed by roots and weakly in flowers. Expression in leaves is light-dependent.

The protein resides in the vacuole membrane. Its function is as follows. Proton-conducting pore forming subunit of the membrane integral V0 complex of vacuolar ATPase. V-ATPase is responsible for acidifying a variety of intracellular compartments in eukaryotic cells. Necessary for the crassulacean acid metabolism. The protein is V-type proton ATPase 16 kDa proteolipid subunit of Kalanchoe daigremontiana (Devil's backbone).